Reading from the N-terminus, the 1224-residue chain is Tyrosine-protein kinase abl-1 (1224 aa).

In terms of domain architecture, SH3 spans 115–188; that stretch reads SSAPLFVALY…PSNFIAPYNS (74 aa). One can recognise an SH2 domain in the interval 194–284; sequence WYHGKISRSD…GLICLLMYPA (91 aa). Residues 311–562 enclose the Protein kinase domain; the sequence is IIMHNKLGGG…PRFRDIHFNL (252 aa). Residues 317–325, lysine 340, and 385–391 each bind ATP; these read LGGGQYGDV and EFMCNGN. Aspartate 432 serves as the catalytic Proton acceptor. The short motif at 450–474 is the Kinase activation loop element; that stretch reads DFGLARFMKEDTYTAHAGAKFPIKW. Residues 579–620 show a composition bias toward basic and acidic residues; the sequence is LKKNNDKKLESDKRRSNVRERSDSKSRHSSHHDRDRDRESLH. Disordered stretches follow at residues 579–671, 736–775, 796–881, 914–937, and 968–1016; these read LKKN…NTKP, KEST…STYV, KRSE…DVGM, LRHV…ATDN, and RPFS…RSNG. 2 stretches are compositionally biased toward polar residues: residues 639–655 and 746–760; these read SVSF…TSFR and AGSS…NDSL. 2 stretches are compositionally biased toward basic and acidic residues: residues 797-819 and 864-877; these read RSET…KSEK and PDSK…ETTK. The segment covering 973-984 has biased composition (polar residues); the sequence is QCPNNSTSSAIS. The span at 1001–1016 shows a compositional bias: basic and acidic residues; it reads YEERMKPELPRKRSNG.

This sequence belongs to the protein kinase superfamily. Tyr protein kinase family. ABL subfamily. In terms of assembly, interacts (via SH2 and SH3 domains) with mig-13; the interaction is direct. May interact with soem-1.

The protein resides in the cell membrane. The protein localises to the cytoplasm. It carries out the reaction L-tyrosyl-[protein] + ATP = O-phospho-L-tyrosyl-[protein] + ADP + H(+). Its function is as follows. Functions downstream of migratory protein mig-13 and is involved in Q neuroblast migration during larval development. Recruited by mig-13 to the leading edge of Q neuroblasts and their descendents to signal downstream, likely to the wve-1 pathway, and direct migration along the anteroposterior body axis. Promotes germline cell apoptosis in response to oxidative, osmotic and heat shock stresses. This Caenorhabditis elegans protein is Tyrosine-protein kinase abl-1 (abl-1).